The chain runs to 122 residues: MKYVLILCVITLATVAYAQPQCVGCPSEVKGDKLKQSEETLNKSLSKLAAGDGPTYKLVKINSATTQVVSGSKDVINADLKDENDKTKTCDITIWSQPWLENGIEVTFNCPGEPKVVKKHSA.

The N-terminal stretch at 1–20 is a signal peptide; the sequence is MKYVLILCVITLATVAYAQP. The residue at position 21 (Gln21) is a Pyrrolidone carboxylic acid. A Secondary area of contact motif is present at residues 67-71; sequence QVVSG.

This sequence belongs to the cystatin family.

Selectively inhibits the activity of cysteine proteinase of hemocytes, protecting developing adult tissue in pupae from attack by the proteinase. The polypeptide is Sarcocystatin-A (Sarcophaga peregrina (Flesh fly)).